The sequence spans 800 residues: uncharacterized protein (800 aa).

Residues 1-21 (MNRFFISTLLLLAQHLAPAAA) form the signal peptide. The span at 63–72 (SLSTGSPVEI) shows a compositional bias: polar residues. Disordered stretches follow at residues 63 to 470 (SLST…PLTT), 602 to 670 (TPIT…SSTS), and 710 to 776 (SSLS…TPSS). Composition is skewed to low complexity over residues 73–314 (TSTS…SSTS), 321–368 (STSS…SSTS), 375–444 (STSS…TSTP), and 451–470 (TTSTSVPYTSTPVTSTPLTT). Residues 710-720 (SSLSSIPNNST) are compositionally biased toward low complexity. The segment covering 721–734 (EVKTASTSSGTEIK) has biased composition (polar residues). The span at 735–776 (TASTSSGSSSSSSYTPASSTSTTTSSVSSRQSSSSSSFTPSS) shows a compositional bias: low complexity.

The protein localises to the secreted. The protein resides in the cell surface. This is an uncharacterized protein from Schizosaccharomyces pombe (strain 972 / ATCC 24843) (Fission yeast).